We begin with the raw amino-acid sequence, 441 residues long: MTRVIHTGDTHLGYQQYHSPERRQDFLDAFERVVADALDGDVDAVVHAGDLYHDRRPELPDLLGTLAALRRLDDAGIPFLAIVGNHESTRGGQWLDLFERLGLATRLGRDPHVVGGVAFYGLDHVPRSRRDELDYQFDPVDADRAVLVAHGLFTPFAHADWETETVLAESNVDFDAVLLGDNHVPDTAELDGTWVTYCGSTERASASERDPRGYNLVEFTPDAVDIRRRTLETRPFAFVEVDLAGDEGIERVRQRVREFDLEDAVVIVELRGEGETVTPAAVESFAVEEGALVARVNDKRDIDDDGDLATDVTFADPDDAVRERVREMGLSSAALDVDETVRASKVADSNVRDEVRERVESLLSDDPDAFVAAERESDAEAEESESVEDAADGEDAAAVEDTAETAAEAATDTDTETTADTDSETAADPAASRDSSLGDFA.

Residues Asp9, His11, Asp50, and Asn85 each coordinate Mn(2+). The active-site Proton donor is the His86. 3 residues coordinate Mn(2+): His150, Asp181, and His183. The interval 360-441 is disordered; that stretch reads ESLLSDDPDA…SRDSSLGDFA (82 aa). Acidic residues-rich tracts occupy residues 379–403 and 411–425; these read AEAEESESVEDAADGEDAAAVEDTA and TDTDTETTADTDSET.

The protein belongs to the MRE11/RAD32 family. Homodimer. Forms a heterotetramer composed of two Mre11 subunits and two Rad50 subunits. Mn(2+) is required as a cofactor.

With respect to regulation, nuclease activity is regulated by Rad50. Its function is as follows. Part of the Rad50/Mre11 complex, which is involved in the early steps of DNA double-strand break (DSB) repair. Mre11 binds to DSB ends and has both double-stranded 3'-5' exonuclease activity and single-stranded endonuclease activity. In polyploid organisms, the Rad50/Mre11 complex appears to restrain the repair of double-strand breaks by homologous recombination, allowing another pathway to act as the primary mode of repair. The sequence is that of DNA double-strand break repair protein Mre11 from Haloferax volcanii (strain ATCC 29605 / DSM 3757 / JCM 8879 / NBRC 14742 / NCIMB 2012 / VKM B-1768 / DS2) (Halobacterium volcanii).